A 1735-amino-acid chain; its full sequence is Inactive tyrosine-protein kinase PEAK1 (1735 aa).

Disordered stretches follow at residues 26–66 (LHQL…PPVA) and 111–145 (LSQK…KISN). Polar residues-rich tracts occupy residues 111-121 (LSQKPLNNNSE) and 130-145 (DPQQ…KISN). A Phosphoserine modification is found at S282. Disordered stretches follow at residues 324-410 (NSGV…SVKV), 491-514 (GRPK…LTPG), and 537-580 (SPRQ…SKTI). Over residues 325–336 (SGVSYGQGSVQS) the composition is skewed to low complexity. The segment covering 337–365 (TISSDCTSPGSSFTEESRSETASSLSQKV) has biased composition (polar residues). Over residues 367–378 (NGGISPGNPGNS) the composition is skewed to low complexity. The span at 384-393 (TESNFESPPG) shows a compositional bias: polar residues. Residues 498–509 (SSSTPNSPVTSP) show a composition bias toward low complexity. Phosphoserine occurs at positions 537, 569, and 584. Over residues 566–580 (APTSPTATNISSKTI) the composition is skewed to polar residues. 2 positions are modified to phosphotyrosine: Y632 and Y638. S645 carries the post-translational modification Phosphoserine. At Y662 the chain carries Phosphotyrosine. 3 disordered regions span residues 663-762 (EEIE…REKA), 800-919 (PDAD…AADA), and 1019-1097 (RNSE…SATY). 3 stretches are compositionally biased toward polar residues: residues 704–735 (QEFN…QRPT), 745–757 (AQGS…SSNS), and 819–839 (LFTS…SPTA). Phosphoserine occurs at positions 824 and 825. Residues 847-863 (TKPVTSPPSKLVTSAQS) are compositionally biased toward low complexity. Residues 864 to 873 (EPPPPFPPPR) are compositionally biased toward pro residues. The span at 879-901 (YHASNLLQRHFTNWTKPTSPTRS) shows a compositional bias: polar residues. S897 is modified (phosphoserine). Composition is skewed to basic and acidic residues over residues 902–919 (TEAE…AADA) and 1037–1055 (ACSR…RDPR). Residues 1076 to 1086 (EREEEKDDTLD) are compositionally biased toward acidic residues. T1141 carries the post-translational modification Phosphothreonine. Y1177 is modified (phosphotyrosine). The required for homodimerization stretch occupies residues 1274–1300 (EVVGKLRSLHTDALKRLAVKCEDLFMA). Residues 1302-1664 (QKDQLRFGVD…LLWGPREDLF (363 aa)) form the Protein kinase domain. At S1363 the chain carries Phosphoserine. The tract at residues 1394–1445 (WEDPDAPEKAEDGTEDSEEEGKAETLGGNPEPCSETEPSQKENQRVTNRKQR) is disordered. The required for homodimerization stretch occupies residues 1659–1732 (PREDLFQIFT…DSLSYIVKIL (74 aa)).

Belongs to the protein kinase superfamily. As to quaternary structure, homodimer. Interacts with BCAR1 and CRK. Interacts with PRAG1. Interacts (when phosphorylated at Tyr-1177) with SHC1 (via PID domain). Found in a complex with PPP1CA, PPP1CC and SHC1. Interacts (when phosphorylated at Tyr-632) with tensin TNS3 (when phosphorylated on the SH2 domain); TNS3 also interacts with integrins ITGB1, ITGB3 and ITGB5 and mediates their association with PEAK1. Phosphorylated on tyrosine in a CSK-dependent manner in response to adhesion to fibronectin and to EGF stimulation. Phosphorylation at Tyr-662 by a Src family kinase controls subcellular localization to focal adhesion and focal adhesion dynamics. Phosphorylation at Tyr-1177 is essential for binding to SHC1. Phosphorylation at Tyr-632 promotes interaction with tensin TNS3.

The protein localises to the cytoplasm. The protein resides in the cytoskeleton. Its subcellular location is the cell junction. It localises to the focal adhesion. Its function is as follows. Probable catalytically inactive kinase. Scaffolding protein that regulates the cytoskeleton to control cell spreading and migration by modulating focal adhesion dynamics. Acts as a scaffold for mediating EGFR signaling. The sequence is that of Inactive tyrosine-protein kinase PEAK1 (Peak1) from Mus musculus (Mouse).